A 384-amino-acid chain; its full sequence is Small ribosomal subunit protein mS31 (384 aa).

The transit peptide at 1–54 (MLHRIPAFLRPRPFSGLPLSCGNRDVSVAVLPAAQSGAVRTENNIQRHFCTSRS) directs the protein to the mitochondrion. A disordered region spans residues 101–136 (TANVKTPKPRGRKPSASLEATVDRLQKAPEDPPKKR). Positions 121 to 136 (TVDRLQKAPEDPPKKR) are enriched in basic and acidic residues.

It belongs to the mitochondrion-specific ribosomal protein mS31 family. In terms of assembly, component of the mitochondrial ribosome small subunit (28S) which comprises a 12S rRNA and about 30 distinct proteins.

The protein localises to the mitochondrion. This Mus musculus (Mouse) protein is Small ribosomal subunit protein mS31 (Mrps31).